Consider the following 310-residue polypeptide: Proline dehydrogenase (310 aa).

Lys98 is a substrate binding site. Residue Asp135 is part of the active site. FAD is bound by residues Met136, Gln166, 187 to 192 (RMVKGA), 229 to 230 (TH), and 292 to 295 (RIAE). Arg187 is a catalytic residue. 291–292 (RR) is a binding site for substrate.

This sequence belongs to the proline dehydrogenase family. The cofactor is FAD.

It catalyses the reaction L-proline + a quinone = (S)-1-pyrroline-5-carboxylate + a quinol + H(+). It participates in amino-acid degradation; L-proline degradation into L-glutamate; L-glutamate from L-proline: step 1/2. In terms of biological role, converts proline to delta-1-pyrroline-5-carboxylate. The chain is Proline dehydrogenase from Deinococcus radiodurans (strain ATCC 13939 / DSM 20539 / JCM 16871 / CCUG 27074 / LMG 4051 / NBRC 15346 / NCIMB 9279 / VKM B-1422 / R1).